Here is a 221-residue protein sequence, read N- to C-terminus: MAASRPLSRFWEWGKNIVCVGRNYADHVREMRSAVLSEPVLFLKPSTAYAPEGSPILMPAYTRNLHHELELGVVMGKRCRAVPEAAAMDYVGGYALCLDMTARDVQDECKKKGLPWTLAKSFTASCPVSAFVPKEKIPDPHKLKLWLKVNGELRQEGETSSMIFSIPYIISYVSKIITLEEGDIILTGTPKGVGPVKENDEIEAGIHGLVSMTFKVEKPEY.

A mitochondrion-targeting transit peptide spans 1–24; the sequence is MAASRPLSRFWEWGKNIVCVGRNY. Position 22 (Arg22) interacts with oxalate. Ser37 bears the Phosphoserine mark. 3 residues coordinate Mg(2+): Glu68, Glu70, and Asp99. Lys110 is modified (N6-acetyllysine). Lys112 carries the N6-succinyllysine modification. The oxalate site is built by Lys120 and Thr189.

The protein belongs to the FAH family. As to quaternary structure, homodimer. Mg(2+) serves as cofactor. The cofactor is Mn(2+). Ubiquitous (at protein level).

It is found in the mitochondrion. The protein localises to the cytoplasm. The protein resides in the cytosol. It catalyses the reaction oxaloacetate = enol-oxaloacetate. The catalysed reaction is oxaloacetate + H(+) = pyruvate + CO2. The enzyme catalyses a 3-acylpyruvate + H2O = a carboxylate + pyruvate + H(+). It carries out the reaction acetylpyruvate + H2O = acetate + pyruvate + H(+). It catalyses the reaction 3-fumarylpyruvate + H2O = fumarate + pyruvate + H(+). Oxaloacetate decarboxylation is competitively inhibited by oxalate. Functionally, tautomerase that converts enol-oxaloacetate, a strong inhibitor of succinate dehydrogenase, to the physiological keto form of oxaloacetate. It is thereby required to maximize aerobic respiration efficiency by preventing succinate dehydrogenase inhibition. Also acts as a weak oxaloacetate decarboxylase (ODx), catalyzing the decarboxylation of oxaloacetate (OAA) to pyruvate and CO(2), and as such is likely a regulatory enzyme in the TCA cycle. Also displays acylpyruvase activity, being able to hydrolyze acetylpyruvate and fumarylpyruvate in vitro. Exhibits only a weak hydrolase activity on methylacetopyruvate and acetylacetone, and no activity toward acetoacetyl-CoA. The sequence is that of Oxaloacetate tautomerase FAHD1, mitochondrial from Homo sapiens (Human).